Consider the following 117-residue polypeptide: Ribosome-binding factor A (117 aa).

It belongs to the RbfA family. Monomer. Binds 30S ribosomal subunits, but not 50S ribosomal subunits or 70S ribosomes.

The protein resides in the cytoplasm. In terms of biological role, one of several proteins that assist in the late maturation steps of the functional core of the 30S ribosomal subunit. Associates with free 30S ribosomal subunits (but not with 30S subunits that are part of 70S ribosomes or polysomes). Required for efficient processing of 16S rRNA. May interact with the 5'-terminal helix region of 16S rRNA. This chain is Ribosome-binding factor A, found in Leuconostoc citreum (strain KM20).